The chain runs to 363 residues: Phosphoserine aminotransferase (363 aa).

Arg-42 is a binding site for L-glutamate. Pyridoxal 5'-phosphate is bound by residues 76–77, Trp-101, Thr-151, Asp-170, and Gln-193; that span reads AS. Position 194 is an N6-(pyridoxal phosphate)lysine (Lys-194). 234–235 serves as a coordination point for pyridoxal 5'-phosphate; sequence NT.

The protein belongs to the class-V pyridoxal-phosphate-dependent aminotransferase family. SerC subfamily. In terms of assembly, homodimer. Pyridoxal 5'-phosphate is required as a cofactor.

The protein localises to the cytoplasm. The catalysed reaction is O-phospho-L-serine + 2-oxoglutarate = 3-phosphooxypyruvate + L-glutamate. The enzyme catalyses 4-(phosphooxy)-L-threonine + 2-oxoglutarate = (R)-3-hydroxy-2-oxo-4-phosphooxybutanoate + L-glutamate. It functions in the pathway amino-acid biosynthesis; L-serine biosynthesis; L-serine from 3-phospho-D-glycerate: step 2/3. Catalyzes the reversible conversion of 3-phosphohydroxypyruvate to phosphoserine and of 3-hydroxy-2-oxo-4-phosphonooxybutanoate to phosphohydroxythreonine. In Listeria monocytogenes serovar 1/2a (strain ATCC BAA-679 / EGD-e), this protein is Phosphoserine aminotransferase.